Here is a 746-residue protein sequence, read N- to C-terminus: MNKKIHSLALLVNLGIYGVAQAQEPTDTPVSHDDTIVVTAAEQNLQAPGVSTITADEIRKNPVARDVSKIIRTMPGVNLTGNSTSGQRGNNRQIDIRGMGPENTLILIDGKPVSSRNSVRQGWRGERDTRGDTSWVPPEMIERIEVLRGPAAARYGNGAAGGVVNIITKKGSGEWHGSWDAYFNAPEHKEEGATKRTNFSLTGPLGDEFSFRLYGNLDKTQADAWDINQGHQSARAGTYATTLPAGREGVINKDINGVVRWDFAPLQSLELEAGYSRQGNLYAGDTQNTNSDSYTRSKYGDETNRLYRQNYALTWNGGWDNGVTTSNWVQYEHTRNSRIPEGLAGGTEGKFNEKATQDFVDIDLDDVMLHSEVNLPIDFLVNQTLTLGTEWNQQRMKDLSSNTQALTGTNTGGAIDGVSTTDRSPYSKAEIFSLFAENNMELTDSTIVTPGLRFDHHSIVGNNWSPALNISQGLGDDFTLKMGIARAYKAPSLYQTNPNYILYSKGQGCYASAGGCYLQGNDDLKAETSINKEIGLEFKRDGWLAGVTWFRNDYRNKIEAGYVAVGQNAVGTDLYQWDNVPKAVVEGLEGSLNVPVSETVMWTNNITYMLKSENKTTGDRLSIIPEYTLNSTLSWQAREDLSMQTTFTWYGKQQPKKYNYKGQPAVGPETKEISPYSIVGLSATWDVTKNVSLTGGVDNLFDKRLWRAGNAQTTGDLAGANYIAGAGAYTYNEPGRTWYMSVNTHF.

Positions 1-22 (MNKKIHSLALLVNLGIYGVAQA) are cleaved as a signal peptide. The short motif at 34-41 (DTIVVTAA) is the TonB box element. One can recognise a TBDR plug domain in the interval 42–169 (EQNLQAPGVS…AGGVVNIITK (128 aa)). Residues 76 to 96 (GVNLTGNSTSGQRGNNRQIDI) are disordered. A compositionally biased stretch (polar residues) spans 79–93 (LTGNSTSGQRGNNRQ). The 573-residue stretch at 174–746 (EWHGSWDAYF…TWYMSVNTHF (573 aa)) folds into the TBDR beta-barrel domain. Residues 729-746 (YTYNEPGRTWYMSVNTHF) carry the TonB C-terminal box motif.

The protein belongs to the TonB-dependent receptor family.

It is found in the cell outer membrane. Functionally, this protein is involved in the initial step of iron uptake by binding ferrienterobactin (Fe-ENT), an iron chelatin siderophore that allows E.coli to extract iron from the environment. FepA also acts as a receptor for colicins B and D. In Escherichia coli (strain K12), this protein is Ferrienterobactin receptor (fepA).